A 63-amino-acid chain; its full sequence is Jingdongin-1 (63 aa).

The N-terminal stretch at 1–22 is a signal peptide; the sequence is MLTLKKSMLLLFFLGTINLSLC. The propeptide occupies 23–44; sequence EQERDADEEERRDDDEMDVEVE. The cysteines at positions 57 and 63 are disulfide-linked.

As to expression, expressed by the skin glands.

Its subcellular location is the secreted. In terms of biological role, the synthetic peptide has antimicrobial activity against Gram-negative bacterium B.dysenteriae (MIC=35 ug/ml), against Gram-positive bacteria S.aureus ATCC 2592 (MIC=4.7 ug/ml) and B.subtilis ATCC 6633 (MIC=9.38 ug/ml) and against fungus C.albicans (MIC=18.75 ug/ml). Has no activity against Gram-negative bacterium E.coli ATCC 25922 but exhibits low hemolytic activity at concentrations up to 200 ug/ml. The chain is Jingdongin-1 from Amolops jingdongensis (Chinese torrent frog).